The primary structure comprises 574 residues: Penicillin-binding protein activator LpoA (574 aa).

A signal peptide spans 1 to 25; it reads MTILLQRAKFKKRLMPILFPLMLAG. Residue C26 is the site of N-palmitoyl cysteine attachment. C26 carries S-diacylglycerol cysteine lipidation.

It belongs to the LpoA family. Interacts with PBP1a.

Its subcellular location is the cell outer membrane. In terms of biological role, regulator of peptidoglycan synthesis that is essential for the function of penicillin-binding protein 1A (PBP1a). This Mannheimia succiniciproducens (strain KCTC 0769BP / MBEL55E) protein is Penicillin-binding protein activator LpoA.